The chain runs to 353 residues: Abasic site processing protein HMCES (353 aa).

Cys-2 functions as the Nucleophile in the catalytic mechanism. Residue Cys-2 is modified to Thiazolidine linkage to a ring-opened DNA abasic site. The active site involves Glu-127. Glycyl lysine isopeptide (Lys-Gly) (interchain with G-Cter in SUMO2) cross-links involve residues Lys-148 and Lys-151. The residue at position 160 (Ser-160) is a Phosphoserine. Residues Lys-274 and Lys-275 each participate in a glycyl lysine isopeptide (Lys-Gly) (interchain with G-Cter in SUMO2) cross-link. The disordered stretch occupies residues 292–353 (TKSPKKEVPD…DEPVAKRPNS (62 aa)). A Phosphoserine modification is found at Ser-294. The segment covering 295–307 (PKKEVPDSPKKDA) has biased composition (basic and acidic residues). Residue Lys-305 forms a Glycyl lysine isopeptide (Lys-Gly) (interchain with G-Cter in SUMO2) linkage. The residue at position 321 (Ser-321) is a Phosphoserine. Residues 332–338 (SLLDRWL) carry the PIP-box motif. Residues 336 to 353 (RWLKQEKEDEPVAKRPNS) show a composition bias toward basic and acidic residues. Residues Lys-339 and Lys-342 each participate in a glycyl lysine isopeptide (Lys-Gly) (interchain with G-Cter in SUMO2) cross-link.

It belongs to the SOS response-associated peptidase family. Interacts (via PIP-box motif) with PCNA. In terms of processing, ubiquitinated; the covalent HMCES DNA-protein cross-link is ubiquitinated, leading to its degradation by the proteasome.

It is found in the chromosome. With respect to regulation, formation and reversal of DNA-protein cross-link depends on DNA context. Catalyzes formation of the thiazolidine linkage in presence of abasic sites in single-stranded DNA. Mediates the reversal of the thiazolidine cross-link in presence of double stranded DNA. Its function is as follows. Sensor of abasic sites in single-stranded DNA (ssDNA) required to preserve genome integrity by promoting error-free repair of abasic sites. Acts as an enzyme that recognizes and binds abasic sites in ssDNA at replication forks and chemically modifies the lesion by forming a covalent cross-link with DNA: forms a stable thiazolidine linkage between a ring-opened abasic site and the alpha-amino and sulfhydryl substituents of its N-terminal catalytic cysteine residue. Promotes error-free repair by protecting abasic sites from translesion synthesis (TLS) polymerases and endonucleases that are error-prone and would generate mutations and double-strand breaks. The HMCES DNA-protein cross-link is then either reversed or degraded. HMCES is able to catalyze the reversal of its thiazolidine cross-link and cycle between a cross-link and a non-cross-linked state depending on DNA context: mediates self-reversal of the thiazolidine cross-link in double stranded DNA, allowing APEX1 to initiate downstream repair of abasic sites. The HMCES DNA-protein cross-link can also be degraded by the SPRTN metalloprotease following unfolding by the BRIP1/FANCJ helicase. Has preference for ssDNA, but can also accommodate double-stranded DNA with 3' or 5' overhang (dsDNA), and dsDNA-ssDNA 3' junction. Plays a protective role during somatic hypermutation of immunoglobulin genes in B-cells: acts via its ability to form covalent cross-links with abasic sites, thereby limiting the accumulation of deletions in somatic hypermutation target regions. Also involved in class switch recombination (CSR) in B-cells independently of the formation of a DNA-protein cross-link: acts by binding and protecting ssDNA overhangs to promote DNA double-strand break repair through the microhomology-mediated alternative-end-joining (Alt-EJ) pathway. Acts as a protease: mediates autocatalytic processing of its N-terminal methionine in order to expose the catalytic cysteine. This Rattus norvegicus (Rat) protein is Abasic site processing protein HMCES.